The primary structure comprises 179 residues: ATP synthase subunit delta (179 aa).

Belongs to the ATPase delta chain family. As to quaternary structure, F-type ATPases have 2 components, F(1) - the catalytic core - and F(0) - the membrane proton channel. F(1) has five subunits: alpha(3), beta(3), gamma(1), delta(1), epsilon(1). F(0) has three main subunits: a(1), b(2) and c(10-14). The alpha and beta chains form an alternating ring which encloses part of the gamma chain. F(1) is attached to F(0) by a central stalk formed by the gamma and epsilon chains, while a peripheral stalk is formed by the delta and b chains.

It is found in the cell inner membrane. In terms of biological role, f(1)F(0) ATP synthase produces ATP from ADP in the presence of a proton or sodium gradient. F-type ATPases consist of two structural domains, F(1) containing the extramembraneous catalytic core and F(0) containing the membrane proton channel, linked together by a central stalk and a peripheral stalk. During catalysis, ATP synthesis in the catalytic domain of F(1) is coupled via a rotary mechanism of the central stalk subunits to proton translocation. Functionally, this protein is part of the stalk that links CF(0) to CF(1). It either transmits conformational changes from CF(0) to CF(1) or is implicated in proton conduction. In Chlorobium chlorochromatii (strain CaD3), this protein is ATP synthase subunit delta.